The primary structure comprises 481 residues: uncharacterized protein (481 aa).

A disordered region spans residues 1–28 (MPQSNHYSHQSRSHNDRRRQQPDEKVQA). Residues 29–87 (TVNIGQRFPLTIRRLGINGEGIGYYKHVITFVKGALPEEVVVAEVTAVHPRYLEAKIRS) form the TRAM domain. Positions 313, 342, 363, and 411 each coordinate S-adenosyl-L-methionine. Cys438 acts as the Nucleophile in catalysis.

This sequence belongs to the class I-like SAM-binding methyltransferase superfamily. RNA M5U methyltransferase family.

This is an uncharacterized protein from Lactiplantibacillus plantarum (strain ATCC BAA-793 / NCIMB 8826 / WCFS1) (Lactobacillus plantarum).